Here is a 461-residue protein sequence, read N- to C-terminus: Growth/differentiation factor 7 (461 aa).

Residues 1–19 (MDLSAAAALCLWLLSACRP) form the signal peptide. The propeptide occupies 20 to 315 (RDGLEAAAVL…ANLGGRRRRR (296 aa)). A glycan (N-linked (GlcNAc...) asparagine) is linked at N79. A disordered region spans residues 287–360 (LRAAAEPPPD…GHGRRGRSRC (74 aa)). Positions 323–350 (GAQGSGGGGGGGGGGGGGGGGGGGGAGR) are enriched in gly residues. Positions 351-360 (GHGRRGRSRC) are enriched in basic residues. 3 disulfide bridges follow: C360–C426, C389–C458, and C393–C460.

It belongs to the TGF-beta family. In terms of assembly, homodimer; disulfide-linked.

It is found in the secreted. The chain is Growth/differentiation factor 7 (Gdf7) from Mus musculus (Mouse).